The primary structure comprises 213 residues: Large ribosomal subunit protein uL4 (213 aa).

The tract at residues 51-90 is disordered; it reads TASTLTKAEVRGGGRKPYKQKHTGRARQGSIRNPHYVGGG. Residues 63–75 are compositionally biased toward basic residues; sequence GGRKPYKQKHTGR.

Belongs to the universal ribosomal protein uL4 family. Part of the 50S ribosomal subunit.

Its function is as follows. One of the primary rRNA binding proteins, this protein initially binds near the 5'-end of the 23S rRNA. It is important during the early stages of 50S assembly. It makes multiple contacts with different domains of the 23S rRNA in the assembled 50S subunit and ribosome. Functionally, forms part of the polypeptide exit tunnel. The chain is Large ribosomal subunit protein uL4 from Malacoplasma penetrans (strain HF-2) (Mycoplasma penetrans).